The primary structure comprises 93 residues: Pyrimidine/purine nucleoside phosphorylase (93 aa).

The protein belongs to the nucleoside phosphorylase PpnP family.

It catalyses the reaction a purine D-ribonucleoside + phosphate = a purine nucleobase + alpha-D-ribose 1-phosphate. It carries out the reaction adenosine + phosphate = alpha-D-ribose 1-phosphate + adenine. The catalysed reaction is cytidine + phosphate = cytosine + alpha-D-ribose 1-phosphate. The enzyme catalyses guanosine + phosphate = alpha-D-ribose 1-phosphate + guanine. It catalyses the reaction inosine + phosphate = alpha-D-ribose 1-phosphate + hypoxanthine. It carries out the reaction thymidine + phosphate = 2-deoxy-alpha-D-ribose 1-phosphate + thymine. The catalysed reaction is uridine + phosphate = alpha-D-ribose 1-phosphate + uracil. The enzyme catalyses xanthosine + phosphate = alpha-D-ribose 1-phosphate + xanthine. In terms of biological role, catalyzes the phosphorolysis of diverse nucleosides, yielding D-ribose 1-phosphate and the respective free bases. Can use uridine, adenosine, guanosine, cytidine, thymidine, inosine and xanthosine as substrates. Also catalyzes the reverse reactions. The protein is Pyrimidine/purine nucleoside phosphorylase of Vibrio atlanticus (strain LGP32) (Vibrio splendidus (strain Mel32)).